The following is a 521-amino-acid chain: Alkyl hydroperoxide reductase subunit F (521 aa).

213-228 (DVLVVGGGPAGAAAAI) is an FAD binding site. A disulfide bridge connects residues Cys344 and Cys347. 356–370 (RVAVIGGGNSGVEAA) contacts NAD(+). 477 to 487 (TSLPGIFAAGD) contributes to the FAD binding site.

The protein belongs to the class-II pyridine nucleotide-disulfide oxidoreductase family. As to quaternary structure, homodimer. Requires FAD as cofactor.

In terms of biological role, serves to protect the cell against DNA damage by alkyl hydroperoxides. It can use either NADH or NADPH as electron donor for direct reduction of redox dyes or of alkyl hydroperoxides when combined with the AhpC protein. The chain is Alkyl hydroperoxide reductase subunit F (ahpF) from Pseudomonas aeruginosa (strain ATCC 15692 / DSM 22644 / CIP 104116 / JCM 14847 / LMG 12228 / 1C / PRS 101 / PAO1).